The following is a 661-amino-acid chain: Glycogen debranching enzyme (661 aa).

D338 (nucleophile) is an active-site residue. Catalysis depends on E373, which acts as the Proton donor. The tract at residues 460 to 481 is disordered; the sequence is NQLNGEGNRDGSDRNFSNNHGV.

It belongs to the glycosyl hydrolase 13 family.

It catalyses the reaction Hydrolysis of (1-&gt;6)-alpha-D-glucosidic linkages to branches with degrees of polymerization of three or four glucose residues in limit dextrin.. It participates in glycan degradation; glycogen degradation. Its function is as follows. Removes maltotriose and maltotetraose chains that are attached by 1,6-alpha-linkage to the limit dextrin main chain, generating a debranched limit dextrin. This is Glycogen debranching enzyme from Serratia proteamaculans (strain 568).